The chain runs to 536 residues: Protein Rep68 (536 aa).

The 199-residue stretch at 1 to 199 (MPGFYEIVIK…AQHLTHVSQT (199 aa)) folds into the PV NS1-Nuc domain. 3 residues coordinate a divalent metal cation: E83, H90, and H92. The RCR-2 signature appears at 90 to 92 (HMH). Catalysis depends on Y156, which acts as the For nuclease activity. The RCR-3 motif lies at 156–160 (YLLPK). Positions 196–211 (VSQTQEQNKENQNPNS) are enriched in polar residues. Residues 196-216 (VSQTQEQNKENQNPNSDAPVI) form a disordered region. Positions 308–463 (DPQYAASVFL…LDHDFGKVTK (156 aa)) constitute an SF3 helicase domain. Position 334–341 (334–341 (GPATTGKT)) interacts with ATP. The interval 488–536 (KGGAKKRPAPSDADISEPKRVRESVAQPSTSDAEASINYADRLARGHSL) is disordered.

Interacts with host TOPORS. Interacts with host KCTD5. A divalent metal cation serves as cofactor.

The protein resides in the host nucleus. The catalysed reaction is ATP + H2O = ADP + phosphate + H(+). In terms of biological role, plays an essential role in the initiation of viral DNA synthesis. Binds specifically to an inverted terminal repeat element (ITR) on the 3' and 5' ends of the viral DNA, where it cleaves a site specifically to generate a priming site for initiation of the synthesis of a complementary strand. Also plays a role as transcriptional regulator, DNA helicase and as key factor in site-specific integration of the viral genome. Inhibits the host cell cycle G1/S and G2/M transitions. These arrests may provide essential cellular factors for viral DNA replication. The chain is Protein Rep68 (Rep68) from Mammalia (AAV-2).